Reading from the N-terminus, the 597-residue chain is Elongation factor 4 (597 aa).

Residues 2-184 (KNIRNFSIIA…EVVNKIPPPK (183 aa)) form the tr-type G domain. GTP contacts are provided by residues 14-19 (DHGKST) and 131-134 (NKID).

Belongs to the TRAFAC class translation factor GTPase superfamily. Classic translation factor GTPase family. LepA subfamily.

It is found in the cell inner membrane. The enzyme catalyses GTP + H2O = GDP + phosphate + H(+). Functionally, required for accurate and efficient protein synthesis under certain stress conditions. May act as a fidelity factor of the translation reaction, by catalyzing a one-codon backward translocation of tRNAs on improperly translocated ribosomes. Back-translocation proceeds from a post-translocation (POST) complex to a pre-translocation (PRE) complex, thus giving elongation factor G a second chance to translocate the tRNAs correctly. Binds to ribosomes in a GTP-dependent manner. In Chromobacterium violaceum (strain ATCC 12472 / DSM 30191 / JCM 1249 / CCUG 213 / NBRC 12614 / NCIMB 9131 / NCTC 9757 / MK), this protein is Elongation factor 4.